Reading from the N-terminus, the 1388-residue chain is ABC transporter G family member 52 (1388 aa).

Residues 1–24 (MDDAGEICSFSRSSSSAREDDEED) form a disordered region. In terms of domain architecture, ABC transporter 1 spans 135–406 (TNALCITKKI…FKSVGFKCPE (272 aa)). An ATP-binding site is contributed by 168–175 (GPPGSGKT). Positions 484-697 (ELLKANIYRE…ALNALAVNEF (214 aa)) constitute an ABC transmembrane type-2 1 domain. Transmembrane regions (helical) follow at residues 503–523 (LYIFKAIQLKLVAINAMTVFI), 541–561 (ALFYGMMMIVYSALAEMGPAI), 590–610 (IPISFLNTTVWVFLTYYVIGF), 621–641 (FLVLFVLCEVIYALFRFIVAL), 646–666 (VIASNMGPFCILIFMLSCGFI), 675–695 (WWIWLYWISPLMYALNALAVN), and 732–752 (ISIGALLGYVLLFNVLYTICL). Residues 791–1043 (ITFEDIRYSV…ELIKYFEAIQ (253 aa)) form the ABC transporter 2 domain. An ATP-binding site is contributed by 836–843 (GVSGAGKT). An ABC transmembrane type-2 2 domain is found at 1116 to 1330 (TQWLACLWKQ…TLNGLLTSQF (215 aa)). A run of 7 helical transmembrane segments spans residues 1136 to 1156 (IVVRYLFTIVVALLFGTMFWG), 1167 to 1183 (LFSIMGAMYSACMAMGV), 1223 to 1243 (FPYIFLQTIIYCVLVYAMVGY), 1250 to 1270 (FLWYLFFMFFTLSYFTFYGMM), 1280 to 1300 (MSAVVSTAFYNIWNLFSGFLI), 1305 to 1325 (IPVWWRWYYWMCPVAWTLNGL), and 1357 to 1377 (LLWVAAVAVVSFAILFAFLFG).

Belongs to the ABC transporter superfamily. ABCG family. PDR (TC 3.A.1.205) subfamily.

It localises to the membrane. Its function is as follows. May be a general defense protein. The polypeptide is ABC transporter G family member 52 (Oryza sativa subsp. japonica (Rice)).